The following is a 572-amino-acid chain: Dihydroxy-acid dehydratase (572 aa).

Mg(2+) is bound at residue Asp78. Position 119 (Cys119) interacts with [2Fe-2S] cluster. Mg(2+)-binding residues include Asp120 and Lys121. Lys121 is modified (N6-carboxylysine). A [2Fe-2S] cluster-binding site is contributed by Cys192. Glu459 provides a ligand contact to Mg(2+). Catalysis depends on Ser485, which acts as the Proton acceptor.

It belongs to the IlvD/Edd family. In terms of assembly, homodimer. The cofactor is [2Fe-2S] cluster. It depends on Mg(2+) as a cofactor.

The enzyme catalyses (2R)-2,3-dihydroxy-3-methylbutanoate = 3-methyl-2-oxobutanoate + H2O. It catalyses the reaction (2R,3R)-2,3-dihydroxy-3-methylpentanoate = (S)-3-methyl-2-oxopentanoate + H2O. Its pathway is amino-acid biosynthesis; L-isoleucine biosynthesis; L-isoleucine from 2-oxobutanoate: step 3/4. It participates in amino-acid biosynthesis; L-valine biosynthesis; L-valine from pyruvate: step 3/4. Functions in the biosynthesis of branched-chain amino acids. Catalyzes the dehydration of (2R,3R)-2,3-dihydroxy-3-methylpentanoate (2,3-dihydroxy-3-methylvalerate) into 2-oxo-3-methylpentanoate (2-oxo-3-methylvalerate) and of (2R)-2,3-dihydroxy-3-methylbutanoate (2,3-dihydroxyisovalerate) into 2-oxo-3-methylbutanoate (2-oxoisovalerate), the penultimate precursor to L-isoleucine and L-valine, respectively. In Helicobacter hepaticus (strain ATCC 51449 / 3B1), this protein is Dihydroxy-acid dehydratase.